The primary structure comprises 301 residues: Ornithine carbamoyltransferase (301 aa).

Carbamoyl phosphate is bound by residues arginine 100 and 127–130 (HPCQ). L-ornithine is bound by residues asparagine 158, aspartate 221, and 225-226 (SM). Residues 260–261 (CL) and arginine 288 contribute to the carbamoyl phosphate site.

It belongs to the aspartate/ornithine carbamoyltransferase superfamily. OTCase family.

Its subcellular location is the cytoplasm. The catalysed reaction is carbamoyl phosphate + L-ornithine = L-citrulline + phosphate + H(+). The protein operates within amino-acid biosynthesis; L-arginine biosynthesis; L-arginine from L-ornithine and carbamoyl phosphate: step 1/3. Its function is as follows. Reversibly catalyzes the transfer of the carbamoyl group from carbamoyl phosphate (CP) to the N(epsilon) atom of ornithine (ORN) to produce L-citrulline. This Shewanella oneidensis (strain ATCC 700550 / JCM 31522 / CIP 106686 / LMG 19005 / NCIMB 14063 / MR-1) protein is Ornithine carbamoyltransferase.